Reading from the N-terminus, the 301-residue chain is Probable 5-dehydro-4-deoxyglucarate dehydratase (301 aa).

Belongs to the DapA family.

It carries out the reaction 5-dehydro-4-deoxy-D-glucarate + H(+) = 2,5-dioxopentanoate + CO2 + H2O. Its pathway is carbohydrate acid metabolism; D-glucarate degradation; 2,5-dioxopentanoate from D-glucarate: step 2/2. The protein is Probable 5-dehydro-4-deoxyglucarate dehydratase of Allorhizobium ampelinum (strain ATCC BAA-846 / DSM 112012 / S4) (Agrobacterium vitis (strain S4)).